Reading from the N-terminus, the 138-residue chain is Cysteine desulfuration protein SufE (138 aa).

Residue C51 is the Cysteine persulfide intermediate of the active site.

Belongs to the SufE family. Homodimer. Interacts with SufS.

It is found in the cytoplasm. It functions in the pathway cofactor biosynthesis; iron-sulfur cluster biosynthesis. In terms of biological role, participates in cysteine desulfuration mediated by SufS. Cysteine desulfuration mobilizes sulfur from L-cysteine to yield L-alanine and constitutes an essential step in sulfur metabolism for biosynthesis of a variety of sulfur-containing biomolecules. Functions as a sulfur acceptor for SufS, by mediating the direct transfer of the sulfur atom from the S-sulfanylcysteine of SufS, an intermediate product of cysteine desulfuration process. This Escherichia fergusonii (strain ATCC 35469 / DSM 13698 / CCUG 18766 / IAM 14443 / JCM 21226 / LMG 7866 / NBRC 102419 / NCTC 12128 / CDC 0568-73) protein is Cysteine desulfuration protein SufE.